The primary structure comprises 532 residues: 56 kDa type-specific antigen (532 aa).

An N-terminal signal peptide occupies residues 1 to 22 (MKKIMLIASAMSALSLPFSASA). The helical transmembrane segment at 67–87 (TNGLPFGGTLAAGMTIAPGFR) threads the bilayer. Positions 401–428 (QEEDAKNQGEGDCKQQQGTSEKSKKGKD) are disordered. Residues 403–413 (EDAKNQGEGDC) show a composition bias toward basic and acidic residues. Residues 480–500 (TGMVASGALGVAINAAEGVYV) traverse the membrane as a helical segment.

Its subcellular location is the cell membrane. May be an adherent factor for rickettsial adsorption to the host-cell surface and a determinant of virulence of individual rickettsial strain. It is the major outer membrane protein. This Orientia tsutsugamushi (Rickettsia tsutsugamushi) protein is 56 kDa type-specific antigen.